Consider the following 316-residue polypeptide: Ornithine carbamoyltransferase (316 aa).

Residues 57-60, Gln-84, Arg-108, and 135-138 each bind carbamoyl phosphate; these read STRT and HPCQ. Residues Asn-166, Asp-230, and 234 to 235 contribute to the L-ornithine site; that span reads SM. Carbamoyl phosphate-binding positions include 269–270 and Arg-297; that span reads CL.

This sequence belongs to the aspartate/ornithine carbamoyltransferase superfamily. OTCase family.

The protein localises to the cytoplasm. The catalysed reaction is carbamoyl phosphate + L-ornithine = L-citrulline + phosphate + H(+). Its pathway is amino-acid degradation; L-arginine degradation via ADI pathway; carbamoyl phosphate from L-arginine: step 2/2. Functionally, reversibly catalyzes the transfer of the carbamoyl group from carbamoyl phosphate (CP) to the N(epsilon) atom of ornithine (ORN) to produce L-citrulline. The chain is Ornithine carbamoyltransferase from Bacillus anthracis (strain CDC 684 / NRRL 3495).